The following is a 412-amino-acid chain: Maintenance of mitochondrial morphology protein 1 (412 aa).

Residues 1 to 19 (MAQDVCPTRSEPSLSFLQG) are Lumenal-facing. A helical transmembrane segment spans residues 20 to 40 (LILGQLSVVLLIAAFIKFFIF). The Cytoplasmic portion of the chain corresponds to 41 to 412 (GEAPSAEETA…GSLPGIDMPT (372 aa)). An SMP-LTD domain is found at 121 to 337 (QPESLDWFNV…EPRFQEIELP (217 aa)). Over residues 372–384 (ARQELDTETDGLR) the composition is skewed to basic and acidic residues. The segment at 372-412 (ARQELDTETDGLRYRRRPVGDDTYSVSGSMPGSLPGIDMPT) is disordered.

This sequence belongs to the MMM1 family. In terms of assembly, homodimer. Component of the ER-mitochondria encounter structure (ERMES) or MDM complex, composed of MMM1, MDM10, MDM12 and MDM34. An MMM1 homodimer associates with one molecule of MDM12 on each side in a pairwise head-to-tail manner, and the SMP-LTD domains of MMM1 and MDM12 generate a continuous hydrophobic tunnel for phospholipid trafficking.

The protein localises to the endoplasmic reticulum membrane. Its function is as follows. Component of the ERMES/MDM complex, which serves as a molecular tether to connect the endoplasmic reticulum (ER) and mitochondria. Components of this complex are involved in the control of mitochondrial shape and protein biogenesis, and function in nonvesicular lipid trafficking between the ER and mitochondria. The MDM12-MMM1 subcomplex functions in the major beta-barrel assembly pathway that is responsible for biogenesis of all outer membrane beta-barrel proteins, and acts in a late step after the SAM complex. The MDM10-MDM12-MMM1 subcomplex further acts in the TOM40-specific pathway after the action of the MDM12-MMM1 complex. Essential for establishing and maintaining the structure of mitochondria and maintenance of mtDNA nucleoids. The chain is Maintenance of mitochondrial morphology protein 1 from Podospora anserina (strain S / ATCC MYA-4624 / DSM 980 / FGSC 10383) (Pleurage anserina).